An 88-amino-acid polypeptide reads, in one-letter code: Sec-independent protein translocase protein TatA (88 aa).

The helical transmembrane segment at 1 to 21 threads the bilayer; it reads MGGISIWQLLIIALIVVLLFG. Residues 43–88 are disordered; it reads MSSEEDKKALEDAEAAKPVQTAQTVQSAQPTQQATEKKPESNKEQA. Over residues 46 to 57 the composition is skewed to basic and acidic residues; it reads EEDKKALEDAEA. The segment covering 62–76 has biased composition (polar residues); it reads QTAQTVQSAQPTQQA. Residues 77-88 show a composition bias toward basic and acidic residues; that stretch reads TEKKPESNKEQA.

This sequence belongs to the TatA/E family. The Tat system comprises two distinct complexes: a TatABC complex, containing multiple copies of TatA, TatB and TatC subunits, and a separate TatA complex, containing only TatA subunits. Substrates initially bind to the TatABC complex, which probably triggers association of the separate TatA complex to form the active translocon.

It localises to the cell inner membrane. In terms of biological role, part of the twin-arginine translocation (Tat) system that transports large folded proteins containing a characteristic twin-arginine motif in their signal peptide across membranes. TatA could form the protein-conducting channel of the Tat system. This chain is Sec-independent protein translocase protein TatA, found in Shewanella oneidensis (strain ATCC 700550 / JCM 31522 / CIP 106686 / LMG 19005 / NCIMB 14063 / MR-1).